Reading from the N-terminus, the 807-residue chain is Tyrosine-protein phosphatase non-receptor type 22 (807 aa).

One can recognise a Tyrosine-protein phosphatase domain in the interval 24–289 (FANEFLKLKR…ELVYNAVLEL (266 aa)). Ser-35 is subject to Phosphoserine; by PKC/PRKCD. Cys-129 and Cys-227 are oxidised to a cystine. Catalysis depends on Cys-227, which acts as the Phosphocysteine intermediate. Substrate-binding positions include 227-233 (CSAGCGR) and Gln-274. Phosphoserine occurs at positions 449, 635, 684, and 692. 2 disordered regions span residues 676–700 (SVKL…LPER) and 724–746 (SYPD…GKSF).

It belongs to the protein-tyrosine phosphatase family. Non-receptor class 4 subfamily. As to quaternary structure, interacts with CSK. Interacts with LPXN. Interacts with CBL. Interacts with TRAF3 (via MATH domain); the interaction promotes TRAF3 polyubiquitination. In terms of processing, phosphorylation on Ser-35 by PKC/PRKCD abrogates its ability to dephosphorylate and inactivate the SRC family kinases. As to expression, expressed in bone marrow, B and T-cells, PBMCs, natural killer cells, monocytes, dendritic cells and neutrophils. Both isoform 1 and 4 are predominantly expressed in lymphoid tissues and cells. Isoform 1 is expressed in thymocytes and both mature B and T-cells.

It localises to the cytoplasm. The catalysed reaction is O-phospho-L-tyrosyl-[protein] + H2O = L-tyrosyl-[protein] + phosphate. It carries out the reaction N-(5Z,8Z,11Z,14Z-eicosatetraenoyl)-ethanolamine phosphate + H2O = N-(5Z,8Z,11Z,14Z-eicosatetraenoyl)-ethanolamine + phosphate. With respect to regulation, down-regulated by phosphorylation. Its function is as follows. Acts as a negative regulator of T-cell receptor (TCR) signaling by direct dephosphorylation of the Src family kinases LCK and FYN, ITAMs of the TCRz/CD3 complex, as well as ZAP70, VAV, VCP and other key signaling molecules. Associates with and probably dephosphorylates CBL. Dephosphorylates LCK at its activating 'Tyr-394' residue. Dephosphorylates ZAP70 at its activating 'Tyr-493' residue. Dephosphorylates the immune system activator SKAP2. Positively regulates toll-like receptor (TLR)-induced type 1 interferon production. Promotes host antiviral responses mediated by type 1 interferon. Regulates NOD2-induced pro-inflammatory cytokine secretion and autophagy. Acts as an activator of NLRP3 inflammasome assembly by mediating dephosphorylation of 'Tyr-861' of NLRP3. Dephosphorylates phospho-anandamide (p-AEA), an endocannabinoid to anandamide (also called N-arachidonoylethanolamide). The chain is Tyrosine-protein phosphatase non-receptor type 22 (PTPN22) from Homo sapiens (Human).